A 126-amino-acid chain; its full sequence is MHLSLLKTKIHRATVTHSELNYEGSIAIDDNLLAATGIREFEQVHIWDVTNGARFSTYAIRAEAGSGVVSLNGGAARHVQVGDIIIIAAFASMTEQEADSFKPKLVYVDGNNQISHTNDTIPTQAA.

S25 (schiff-base intermediate with substrate; via pyruvic acid) is an active-site residue. S25 carries the post-translational modification Pyruvic acid (Ser). T57 provides a ligand contact to substrate. Y58 serves as the catalytic Proton donor. G73 to A75 is a substrate binding site.

The protein belongs to the PanD family. Heterooctamer of four alpha and four beta subunits. Pyruvate serves as cofactor. Post-translationally, is synthesized initially as an inactive proenzyme, which is activated by self-cleavage at a specific serine bond to produce a beta-subunit with a hydroxyl group at its C-terminus and an alpha-subunit with a pyruvoyl group at its N-terminus.

The protein localises to the cytoplasm. The catalysed reaction is L-aspartate + H(+) = beta-alanine + CO2. Its pathway is cofactor biosynthesis; (R)-pantothenate biosynthesis; beta-alanine from L-aspartate: step 1/1. Catalyzes the pyruvoyl-dependent decarboxylation of aspartate to produce beta-alanine. The protein is Aspartate 1-decarboxylase of Stenotrophomonas maltophilia (strain R551-3).